A 464-amino-acid chain; its full sequence is tRNA modification GTPase MnmE (464 aa).

(6S)-5-formyl-5,6,7,8-tetrahydrofolate contacts are provided by Arg-25, Glu-87, and Lys-130. Residues 226–386 enclose the TrmE-type G domain; the sequence is GLSVVLAGQP…LRAELLRIAG (161 aa). Asn-236 provides a ligand contact to K(+). Residues 236–241, 255–261, and 280–283 each bind GTP; these read NVGKSS, TPIAGTT, and DTAG. Ser-240 contributes to the Mg(2+) binding site. Residues Thr-255, Ile-257, and Thr-260 each coordinate K(+). Thr-261 is a binding site for Mg(2+). Lys-464 provides a ligand contact to (6S)-5-formyl-5,6,7,8-tetrahydrofolate.

It belongs to the TRAFAC class TrmE-Era-EngA-EngB-Septin-like GTPase superfamily. TrmE GTPase family. In terms of assembly, homodimer. Heterotetramer of two MnmE and two MnmG subunits. K(+) serves as cofactor.

It is found in the cytoplasm. Functionally, exhibits a very high intrinsic GTPase hydrolysis rate. Involved in the addition of a carboxymethylaminomethyl (cmnm) group at the wobble position (U34) of certain tRNAs, forming tRNA-cmnm(5)s(2)U34. The sequence is that of tRNA modification GTPase MnmE from Burkholderia orbicola (strain MC0-3).